The chain runs to 168 residues: 3-isopropylmalate dehydratase small subunit (168 aa).

Belongs to the LeuD family. LeuD type 2 subfamily. In terms of assembly, heterodimer of LeuC and LeuD.

It catalyses the reaction (2R,3S)-3-isopropylmalate = (2S)-2-isopropylmalate. It participates in amino-acid biosynthesis; L-leucine biosynthesis; L-leucine from 3-methyl-2-oxobutanoate: step 2/4. Its function is as follows. Catalyzes the isomerization between 2-isopropylmalate and 3-isopropylmalate, via the formation of 2-isopropylmaleate. This Sulfurisphaera tokodaii (strain DSM 16993 / JCM 10545 / NBRC 100140 / 7) (Sulfolobus tokodaii) protein is 3-isopropylmalate dehydratase small subunit (leuD).